The chain runs to 96 residues: Putative translation initiation factor IF-1, chloroplastic (96 aa).

One can recognise an S1-like domain in the interval 18–57 (INYVSGKIRHSFIRILPGDRVKIEVSPYDSTKGRIIYRLH).

This sequence belongs to the IF-1 family. As to quaternary structure, component of the 30S ribosomal translation pre-initiation complex which assembles on the 30S ribosome in the order IF-2 and IF-3, IF-1 and N-formylmethionyl-tRNA(fMet); mRNA recruitment can occur at any time during PIC assembly.

Its subcellular location is the plastid. The protein localises to the chloroplast. Its function is as follows. One of the essential components for the initiation of protein synthesis. Stabilizes the binding of IF-2 and IF-3 on the 30S subunit to which N-formylmethionyl-tRNA(fMet) subsequently binds. Helps modulate mRNA selection, yielding the 30S pre-initiation complex (PIC). Upon addition of the 50S ribosomal subunit IF-1, IF-2 and IF-3 are released leaving the mature 70S translation initiation complex. In Nicotiana tabacum (Common tobacco), this protein is Putative translation initiation factor IF-1, chloroplastic (infA).